The primary structure comprises 223 residues: Phosphoribosylformylglycinamidine synthase subunit PurQ (223 aa).

Positions 3 to 223 constitute a Glutamine amidotransferase type-1 domain; it reads SAVVQLPGLN…FASALDVIAA (221 aa). C86 serves as the catalytic Nucleophile. Residues H196 and E198 contribute to the active site.

In terms of assembly, part of the FGAM synthase complex composed of 1 PurL, 1 PurQ and 2 PurS subunits.

The protein resides in the cytoplasm. It carries out the reaction N(2)-formyl-N(1)-(5-phospho-beta-D-ribosyl)glycinamide + L-glutamine + ATP + H2O = 2-formamido-N(1)-(5-O-phospho-beta-D-ribosyl)acetamidine + L-glutamate + ADP + phosphate + H(+). The catalysed reaction is L-glutamine + H2O = L-glutamate + NH4(+). It participates in purine metabolism; IMP biosynthesis via de novo pathway; 5-amino-1-(5-phospho-D-ribosyl)imidazole from N(2)-formyl-N(1)-(5-phospho-D-ribosyl)glycinamide: step 1/2. Part of the phosphoribosylformylglycinamidine synthase complex involved in the purines biosynthetic pathway. Catalyzes the ATP-dependent conversion of formylglycinamide ribonucleotide (FGAR) and glutamine to yield formylglycinamidine ribonucleotide (FGAM) and glutamate. The FGAM synthase complex is composed of three subunits. PurQ produces an ammonia molecule by converting glutamine to glutamate. PurL transfers the ammonia molecule to FGAR to form FGAM in an ATP-dependent manner. PurS interacts with PurQ and PurL and is thought to assist in the transfer of the ammonia molecule from PurQ to PurL. This is Phosphoribosylformylglycinamidine synthase subunit PurQ from Rhizobium johnstonii (strain DSM 114642 / LMG 32736 / 3841) (Rhizobium leguminosarum bv. viciae).